Here is a 581-residue protein sequence, read N- to C-terminus: Proline--tRNA ligase (581 aa).

This sequence belongs to the class-II aminoacyl-tRNA synthetase family. ProS type 1 subfamily. Homodimer.

It is found in the cytoplasm. The catalysed reaction is tRNA(Pro) + L-proline + ATP = L-prolyl-tRNA(Pro) + AMP + diphosphate. In terms of biological role, catalyzes the attachment of proline to tRNA(Pro) in a two-step reaction: proline is first activated by ATP to form Pro-AMP and then transferred to the acceptor end of tRNA(Pro). As ProRS can inadvertently accommodate and process non-cognate amino acids such as alanine and cysteine, to avoid such errors it has two additional distinct editing activities against alanine. One activity is designated as 'pretransfer' editing and involves the tRNA(Pro)-independent hydrolysis of activated Ala-AMP. The other activity is designated 'posttransfer' editing and involves deacylation of mischarged Ala-tRNA(Pro). The misacylated Cys-tRNA(Pro) is not edited by ProRS. This is Proline--tRNA ligase from Azoarcus sp. (strain BH72).